A 437-amino-acid polypeptide reads, in one-letter code: Epsilon-sarcoglycan (437 aa).

At 1-317 the chain is on the extracellular side; that stretch reads MQLPWWWELG…LKSRDYYTDF (317 aa). N200 is a glycosylation site (N-linked (GlcNAc...) asparagine). A helical membrane pass occupies residues 318–338; sequence LVTLAVPSAVALVLFLILAYI. The Cytoplasmic portion of the chain corresponds to 339–437; the sequence is MCCRREGVEK…QQQTTGKWYS (99 aa). The disordered stretch occupies residues 418-437; that stretch reads QNLPHQTQIPQQQTTGKWYS.

The protein belongs to the sarcoglycan alpha/epsilon family. N-glycosylated. Post-translationally, ubiquitinated, leading to its degradation by the proteasome.

The protein resides in the cell membrane. It is found in the sarcolemma. The protein localises to the cytoplasm. It localises to the cytoskeleton. Its subcellular location is the cell projection. The protein resides in the dendrite. It is found in the golgi apparatus. Component of the sarcoglycan complex, a subcomplex of the dystrophin-glycoprotein complex which forms a link between the F-actin cytoskeleton and the extracellular matrix. This chain is Epsilon-sarcoglycan (SGCE), found in Bos taurus (Bovine).